The chain runs to 328 residues: Mitochondrial GTPase 1 (328 aa).

Positions 10-199 constitute a CP-type G domain; that stretch reads KTTLKRLRDS…MVDTPGIMLP (190 aa). GTP-binding positions include 57–60, 143–148, and Gly195; these read NKCD and NVGKSS.

Belongs to the TRAFAC class YlqF/YawG GTPase family. MTG1 subfamily.

Its subcellular location is the mitochondrion inner membrane. Functionally, mitochondrial GTPase involved in assembly of the large ribosomal subunit. Plays a role in expression of the mitochondrial translational machinery. The sequence is that of Mitochondrial GTPase 1 from Schizosaccharomyces japonicus (strain yFS275 / FY16936) (Fission yeast).